Reading from the N-terminus, the 282-residue chain is Transmembrane protein 41B (282 aa).

Residues 1 to 36 form a disordered region; that stretch reads MAKKRAGNRETESSPLVEQEPRPSKETPVPKGAQSP. 6 helical membrane passes run 43-63, 102-122, 138-160, 188-208, 216-236, and 251-271; these read MSIL…YLVF, TQVL…AIPG, LALF…LSYL, LINY…FINI, PLGV…FVAI, and AVSW…ILPV. Positions 131 to 242 are VTT domain; required for its function in autophagy; the sequence is GYLYPFPLAL…FVAINAGTTL (112 aa).

The protein belongs to the TMEM41 family.

The protein localises to the endoplasmic reticulum membrane. The protein resides in the endomembrane system. It carries out the reaction a 1,2-diacyl-sn-glycero-3-phospho-L-serine(in) = a 1,2-diacyl-sn-glycero-3-phospho-L-serine(out). The enzyme catalyses cholesterol(in) = cholesterol(out). It catalyses the reaction a 1,2-diacyl-sn-glycero-3-phosphocholine(in) = a 1,2-diacyl-sn-glycero-3-phosphocholine(out). The catalysed reaction is a 1,2-diacyl-sn-glycero-3-phosphoethanolamine(in) = a 1,2-diacyl-sn-glycero-3-phosphoethanolamine(out). In terms of biological role, phospholipid scramblase involved in lipid homeostasis and membrane dynamics processes. Has phospholipid scramblase activity toward cholesterol and phosphatidylserine, as well as phosphatidylethanolamine and phosphatidylcholine. Required for autophagosome formation: participates in early stages of autophagosome biogenesis at the endoplasmic reticulum (ER) membrane by reequilibrating the leaflets of the ER as lipids are extracted by atg2 (atg2a or atg2b) to mediate autophagosome assembly. In addition to autophagy, involved in other processes in which phospholipid scramblase activity is required. Required for normal motor neuron development. This is Transmembrane protein 41B from Danio rerio (Zebrafish).